The primary structure comprises 325 residues: Probable siderophore-binding lipoprotein YfiY (325 aa).

Residues 1-20 form the signal peptide; the sequence is MKKHISMLFVFLMAVMVLSA. Cysteine 21 carries N-palmitoyl cysteine lipidation. Cysteine 21 carries the S-diacylglycerol cysteine lipid modification. The Fe/B12 periplasmic-binding domain maps to 56-325; that stretch reads RIVVLTNEGT…DIETYFLKTK (270 aa). Position 290 is a phosphoserine (serine 290). Threonine 302 is subject to Phosphothreonine.

It belongs to the bacterial solute-binding protein 8 family. In terms of assembly, the complex is composed of one ATP-binding protein (YusV), two transmembrane proteins (YfiZ and YfhA) and a solute-binding protein (YfiY). Interacts with FloT.

Its subcellular location is the cell membrane. It localises to the cytoplasm. The protein localises to the membrane raft. Its function is as follows. Part of the ABC transporter complex YfiYZ/YfhA/YusV involved in import of the iron-hydroxamate siderophores schizokinen, arthrobactin and corprogen. Binds the siderophores and delivers them to the surface of YfiZ/YfhA. In Bacillus subtilis (strain 168), this protein is Probable siderophore-binding lipoprotein YfiY (yfiY).